Here is a 94-residue protein sequence, read N- to C-terminus: MTKRTKKVGVTGKYGVRYGASLRRDVRKIEVQQHSRYQCPFCGRNTVKRTAAGIWCCNGKGCKKVLAGGAWTVTTAAATSARSTIRRLREMVEV.

The segment at 39 to 62 (CPFCGRNTVKRTAAGIWCCNGKGC) adopts a C4-type zinc-finger fold.

Belongs to the eukaryotic ribosomal protein eL43 family. Component of the large ribosomal subunit (LSU). Mature yeast ribosomes consist of a small (40S) and a large (60S) subunit. The 40S small subunit contains 1 molecule of ribosomal RNA (18S rRNA) and at least 33 different proteins. The large 60S subunit contains 3 rRNA molecules (25S, 5.8S and 5S rRNA) and at least 46 different proteins.

The protein localises to the cytoplasm. Its function is as follows. Component of the ribosome, a large ribonucleoprotein complex responsible for the synthesis of proteins in the cell. The small ribosomal subunit (SSU) binds messenger RNAs (mRNAs) and translates the encoded message by selecting cognate aminoacyl-transfer RNA (tRNA) molecules. The large subunit (LSU) contains the ribosomal catalytic site termed the peptidyl transferase center (PTC), which catalyzes the formation of peptide bonds, thereby polymerizing the amino acids delivered by tRNAs into a polypeptide chain. The nascent polypeptides leave the ribosome through a tunnel in the LSU and interact with protein factors that function in enzymatic processing, targeting, and the membrane insertion of nascent chains at the exit of the ribosomal tunnel. The sequence is that of Large ribosomal subunit protein eL43A (rpl4301) from Schizosaccharomyces pombe (strain 972 / ATCC 24843) (Fission yeast).